Consider the following 208-residue polypeptide: Protein-methionine-sulfoxide reductase heme-binding subunit MsrQ (208 aa).

Helical transmembrane passes span 16 to 36 (IAVFVACLLPLVWYGARFVGG), 53 to 73 (WGLIFLLASLAATPARLLWGW), 82 to 102 (MVGLFAFFYVCLHLLSYIGLD), 118 to 138 (TYITVGMAALLLLVPLAVTST), 156 to 176 (LVYPAAVLGVLHYMLMVKADL), and 178 to 198 (EPLIFAGILGLLLAVRLVPAV).

The protein belongs to the MsrQ family. As to quaternary structure, heterodimer of a catalytic subunit (MsrP) and a heme-binding subunit (MsrQ). The cofactor is FMN. It depends on heme b as a cofactor.

It is found in the cell inner membrane. In terms of biological role, part of the MsrPQ system that repairs oxidized periplasmic proteins containing methionine sulfoxide residues (Met-O), using respiratory chain electrons. Thus protects these proteins from oxidative-stress damage caused by reactive species of oxygen and chlorine generated by the host defense mechanisms. MsrPQ is essential for the maintenance of envelope integrity under bleach stress, rescuing a wide series of structurally unrelated periplasmic proteins from methionine oxidation. MsrQ provides electrons for reduction to the reductase catalytic subunit MsrP, using the quinone pool of the respiratory chain. This Rhodospirillum rubrum (strain ATCC 11170 / ATH 1.1.1 / DSM 467 / LMG 4362 / NCIMB 8255 / S1) protein is Protein-methionine-sulfoxide reductase heme-binding subunit MsrQ.